A 424-amino-acid chain; its full sequence is Kynureninase (424 aa).

Pyridoxal 5'-phosphate is bound by residues Leu-106, Thr-107, 134-137 (FPSD), Asp-219, His-222, and Tyr-244. Lys-245 is modified (N6-(pyridoxal phosphate)lysine). Residues Trp-274 and Asn-302 each coordinate pyridoxal 5'-phosphate.

It belongs to the kynureninase family. As to quaternary structure, homodimer. The cofactor is pyridoxal 5'-phosphate.

It carries out the reaction L-kynurenine + H2O = anthranilate + L-alanine + H(+). It catalyses the reaction 3-hydroxy-L-kynurenine + H2O = 3-hydroxyanthranilate + L-alanine + H(+). The protein operates within amino-acid degradation; L-kynurenine degradation; L-alanine and anthranilate from L-kynurenine: step 1/1. It participates in cofactor biosynthesis; NAD(+) biosynthesis; quinolinate from L-kynurenine: step 2/3. Its function is as follows. Catalyzes the cleavage of L-kynurenine (L-Kyn) and L-3-hydroxykynurenine (L-3OHKyn) into anthranilic acid (AA) and 3-hydroxyanthranilic acid (3-OHAA), respectively. The polypeptide is Kynureninase (Xanthomonas campestris pv. campestris (strain B100)).